Consider the following 513-residue polypeptide: Fructose import ATP-binding protein FruK (513 aa).

ABC transporter domains follow at residues 8–244 and 262–505; these read VVMK…IGKS and PGEK…IANT. Residue 40-47 coordinates ATP; the sequence is GENGAGKS.

This sequence belongs to the ABC transporter superfamily. In terms of assembly, the complex is composed of an ATP-binding protein (FruK), two transmembrane proteins (FruF and FruG) and a solute-binding protein (FruE).

It localises to the cell membrane. The catalysed reaction is D-fructose(out) + ATP + H2O = D-fructose(in) + ADP + phosphate + H(+). Functionally, part of the high-affinity ABC transporter complex FruEKFG involved in fructose uptake. Can also transport ribose and xylose, with lower affinity. Probably responsible for energy coupling to the transport system. The protein is Fructose import ATP-binding protein FruK of Bifidobacterium longum (strain NCC 2705).